The chain runs to 215 residues: Octanoyltransferase (215 aa).

Positions 31–206 constitute a BPL/LPL catalytic domain; the sequence is TSAEDEIWLV…QLVKHLDYAE (176 aa). Substrate contacts are provided by residues 70-77, 137-139, and 150-152; these read RGGQVTYH, SLG, and GLA. Cys-168 acts as the Acyl-thioester intermediate in catalysis.

It belongs to the LipB family.

Its subcellular location is the cytoplasm. The enzyme catalyses octanoyl-[ACP] + L-lysyl-[protein] = N(6)-octanoyl-L-lysyl-[protein] + holo-[ACP] + H(+). It participates in protein modification; protein lipoylation via endogenous pathway; protein N(6)-(lipoyl)lysine from octanoyl-[acyl-carrier-protein]: step 1/2. Catalyzes the transfer of endogenously produced octanoic acid from octanoyl-acyl-carrier-protein onto the lipoyl domains of lipoate-dependent enzymes. Lipoyl-ACP can also act as a substrate although octanoyl-ACP is likely to be the physiological substrate. The sequence is that of Octanoyltransferase from Pseudomonas fluorescens (strain SBW25).